A 327-amino-acid chain; its full sequence is L-lactate dehydrogenase (327 aa).

Residues V18, D39, K44, Y69, and 83–84 (GA) contribute to the NAD(+) site. Substrate is bound by residues Q86, R92, and 124–127 (NPVD). NAD(+) is bound by residues 122–124 (AAN) and S147. 152-155 (DSAR) is a binding site for substrate. 2 residues coordinate beta-D-fructose 1,6-bisphosphate: R157 and H172. The active-site Proton acceptor is the H179. Y224 bears the Phosphotyrosine mark. T233 contributes to the substrate binding site.

Belongs to the LDH/MDH superfamily. LDH family. Homotetramer.

The protein resides in the cytoplasm. The enzyme catalyses (S)-lactate + NAD(+) = pyruvate + NADH + H(+). Its pathway is fermentation; pyruvate fermentation to lactate; (S)-lactate from pyruvate: step 1/1. Its activity is regulated as follows. Allosterically activated by fructose 1,6-bisphosphate (FBP). Its function is as follows. Catalyzes the conversion of lactate to pyruvate. The polypeptide is L-lactate dehydrogenase (Streptococcus equi subsp. equi (strain 4047)).